Consider the following 202-residue polypeptide: FMN-dependent NADH:quinone oxidoreductase (202 aa).

FMN contacts are provided by residues S9, 15–17 (SAS), and 94–97 (MYNL).

Belongs to the azoreductase type 1 family. Homodimer. It depends on FMN as a cofactor.

The enzyme catalyses 2 a quinone + NADH + H(+) = 2 a 1,4-benzosemiquinone + NAD(+). It carries out the reaction N,N-dimethyl-1,4-phenylenediamine + anthranilate + 2 NAD(+) = 2-(4-dimethylaminophenyl)diazenylbenzoate + 2 NADH + 2 H(+). Its function is as follows. Quinone reductase that provides resistance to thiol-specific stress caused by electrophilic quinones. Also exhibits azoreductase activity. Catalyzes the reductive cleavage of the azo bond in aromatic azo compounds to the corresponding amines. The sequence is that of FMN-dependent NADH:quinone oxidoreductase from Gluconobacter oxydans (strain 621H) (Gluconobacter suboxydans).